The sequence spans 468 residues: MAGFKVPSWITYKSFWIAVSSSVTTACVILGTLEFRKHRSIRRLQSMIVPEAGKSIQLSSSGVPIEIYDAGEEDEGISKGVPYDENLIREQLARNYAFFGEDGMERLRNSFVIVVGCGGVGSWVINMLARSGVQKIRIVDFDQVSLSSLNRHSIATLQDVGTPKTLAIKKAIKKFAPWIEVDARNALFNPDSADDLLSGNPDFVIDAIDNIQTKVDLLSYCYNHKLPVIASTGSACKSDPTRVNIADISATSEDPLSRATRRRLRLLGIMEGIPVVFSTEKPDPRKASLLPLSEEEFEKGDVDELSALPEFRARILPVIGPMPGIFGLTIATYVLTSIAKYPMDPISTMTRPRLYEEAVKRLHAEARKAGVNLDKTFNASEMSYIIEEVYVGRSALPPHESQKVTVVRWNPQLPFDHTNLVAMTRNEARYHEDNVLAKNVDPSTVYGKDVIEVVHSFLRRLRMWEMLY.

Helical transmembrane passes span 15-35 (FWIA…TLEF), 109-129 (NSFV…NMLA), and 315-335 (ILPV…TYVL).

Belongs to the HesA/MoeB/ThiF family.

Its subcellular location is the mitochondrion outer membrane. Catalyzes the ATP-dependent dehydration of threonylcarbamoyladenosine at position 37 (t(6)A37) to form cyclic t(6)A37 (ct(6)A37) in tRNAs that read codons beginning with adenine. This is tRNA threonylcarbamoyladenosine dehydratase (tcd1) from Schizosaccharomyces pombe (strain 972 / ATCC 24843) (Fission yeast).